The primary structure comprises 770 residues: uncharacterized protein (770 aa).

A signal peptide spans 1 to 24 (MVSAAWLRYPSLLTLGILVSRVAA). N-linked (GlcNAc...) asparagine glycans are attached at residues N78, N204, N533, and N638. Residues 746–770 (SWGTGQNDVPPSLGAGIKRDGLRFT) form a disordered region.

Belongs to the glycosyl hydrolase 92 family.

It is found in the secreted. This is an uncharacterized protein from Arthroderma benhamiae (strain ATCC MYA-4681 / CBS 112371) (Trichophyton mentagrophytes).